Consider the following 397-residue polypeptide: Cysteine desulfurase IscS (397 aa).

Pyridoxal 5'-phosphate contacts are provided by residues 72–73, N152, Q180, and 200–202; these read GS and SAH. K203 is modified (N6-(pyridoxal phosphate)lysine). T238 is a binding site for pyridoxal 5'-phosphate. The active-site Cysteine persulfide intermediate is the C328. C328 serves as a coordination point for [2Fe-2S] cluster.

The protein belongs to the class-V pyridoxal-phosphate-dependent aminotransferase family. NifS/IscS subfamily. Homodimer. Forms a heterotetramer with IscU, interacts with other sulfur acceptors. It depends on pyridoxal 5'-phosphate as a cofactor.

It is found in the cytoplasm. The enzyme catalyses (sulfur carrier)-H + L-cysteine = (sulfur carrier)-SH + L-alanine. The protein operates within cofactor biosynthesis; iron-sulfur cluster biosynthesis. Its function is as follows. Master enzyme that delivers sulfur to a number of partners involved in Fe-S cluster assembly, tRNA modification or cofactor biosynthesis. Catalyzes the removal of elemental sulfur atoms from cysteine to produce alanine. Functions as a sulfur delivery protein for Fe-S cluster synthesis onto IscU, an Fe-S scaffold assembly protein, as well as other S acceptor proteins. This is Cysteine desulfurase IscS from Clostridium botulinum (strain ATCC 19397 / Type A).